The sequence spans 226 residues: MTELLRCEKISKFYEEGSQSVQVLNDVSFTINTGGLVAIVGSSGSGKSTLLHILGGLDKPTTGEVWINRQSLQQLSANQLAELRNQQLGFVYQFHHLMADFTALENVMMPMLIGKQNKREAADLAEKMLQAVGLQHRICHRPAALSGGERQRVAIARALVNKPALVLADEPTGNLDQKTTESIFELIKQLNIEQNIAFLLVTHDLKLADKLTRRLIMADGVLREAS.

The region spanning 5–226 (LRCEKISKFY…MADGVLREAS (222 aa)) is the ABC transporter domain. 41 to 48 (GSSGSGKS) is a binding site for ATP.

Belongs to the ABC transporter superfamily. Lipoprotein translocase (TC 3.A.1.125) family. The complex is composed of two ATP-binding proteins (LolD) and two transmembrane proteins (LolC and LolE).

It is found in the cell inner membrane. Part of the ABC transporter complex LolCDE involved in the translocation of mature outer membrane-directed lipoproteins, from the inner membrane to the periplasmic chaperone, LolA. Responsible for the formation of the LolA-lipoprotein complex in an ATP-dependent manner. This Haemophilus ducreyi (strain 35000HP / ATCC 700724) protein is Lipoprotein-releasing system ATP-binding protein LolD.